The sequence spans 263 residues: Calpain small subunit 1 (263 aa).

Met1 carries the N-acetylmethionine modification. Ser6 is modified (phosphoserine). The EF-hand 1; atypical domain maps to 91–125 (EEVRQFRRLFAQLAGDDMEVSATELMNILNKVVTR). Residues Ala104, Asp107, Glu109, Glu114, Asp132, Asp147, Asp149, Thr151, Lys153, and Glu158 each contribute to the Ca(2+) site. 4 consecutive EF-hand domains span residues 134–167 (FGIDTCRSMVAVMDSDTTGKLGFEEFKYLWNNIK), 164–199 (NNIKKWQAVYKQFDVDRSGTIGSSELPGAFEAAGFR), 200–228 (LNEHLYNMIIRRYSDEGGNMDFDNFISCL), and 229–263 (VRLDAMFRAFKSLDKDGTGQIQVNIQEWLQLTMYS). Lys174 carries the N6-acetyllysine modification. The Ca(2+) site is built by Asp177, Asp179, Ser181, Thr183, Glu188, and Asp220.

As to quaternary structure, homodimer or heterodimer of a large (catalytic) and a small (regulatory) subunit. In presence of calcium, the heterodimer dissociates.

It is found in the cytoplasm. The protein resides in the cell membrane. In terms of biological role, regulatory subunit of the calcium-regulated non-lysosomal thiol-protease which catalyzes limited proteolysis of substrates involved in cytoskeletal remodeling and signal transduction. Essential for embryonic development. The chain is Calpain small subunit 1 (CAPNS1) from Bos taurus (Bovine).